Consider the following 189-residue polypeptide: Calcyphosin (189 aa).

EF-hand domains follow at residues 21–56 (LGIQ…LGLV), 57–92 (LDTA…PMSQ), 93–128 (AREA…RTHP), and 136–172 (TEEE…VSAS). The Ca(2+) site is built by Asp34, Asp36, Ser38, Ser40, Glu45, Asp70, Asp72, Ser74, Thr76, Glu81, Asp106, Ser108, Asp110, and Asp117. A Phosphoserine; by PKA modification is found at Ser40.

As to quaternary structure, monomer. Does not form oligomers in the presence of calcium. In terms of processing, phosphorylated in response to thyrotropin and cAMP. In terms of tissue distribution, detected in thyroid, salivary gland, lung, brain and cerebellum (at protein level).

The protein localises to the cytoplasm. Calcium-binding protein. May play a role in cellular signaling events (Potential). This is Calcyphosin (CAPS) from Canis lupus familiaris (Dog).